The chain runs to 239 residues: Large ribosomal subunit protein bL25 (239 aa).

The interval 217-239 is disordered; it reads IKAEAHAAEGTQAEGSTEEGQQQ. Polar residues predominate over residues 229–239; that stretch reads AEGSTEEGQQQ.

Belongs to the bacterial ribosomal protein bL25 family. CTC subfamily. As to quaternary structure, part of the 50S ribosomal subunit; part of the 5S rRNA/L5/L18/L25 subcomplex. Contacts the 5S rRNA. Binds to the 5S rRNA independently of L5 and L18.

Its function is as follows. This is one of the proteins that binds to the 5S RNA in the ribosome where it forms part of the central protuberance. This Deinococcus deserti (strain DSM 17065 / CIP 109153 / LMG 22923 / VCD115) protein is Large ribosomal subunit protein bL25.